The primary structure comprises 398 residues: G2/mitotic-specific cyclin-B2 (398 aa).

The residue at position 8 (T8) is a Phosphothreonine. S11, S77, and S92 each carry phosphoserine. At T94 the chain carries Phosphothreonine. Residues S99, S392, and S398 each carry the phosphoserine modification.

It belongs to the cyclin family. Cyclin AB subfamily. As to quaternary structure, interacts with the CDK1 protein kinase to form a serine/threonine kinase holoenzyme complex also known as maturation promoting factor (MPF). The cyclin subunit imparts substrate specificity to the complex.

Its function is as follows. Essential for the control of the cell cycle at the G2/M (mitosis) transition. This chain is G2/mitotic-specific cyclin-B2 (CCNB2), found in Macaca fascicularis (Crab-eating macaque).